We begin with the raw amino-acid sequence, 545 residues long: Chaperonin GroEL (545 aa).

ATP-binding positions include 30 to 33 (TLGP), Lys-51, 87 to 91 (DGTTT), Gly-415, and Asp-495.

This sequence belongs to the chaperonin (HSP60) family. In terms of assembly, forms a cylinder of 14 subunits composed of two heptameric rings stacked back-to-back. Interacts with the co-chaperonin GroES.

The protein resides in the cytoplasm. The catalysed reaction is ATP + H2O + a folded polypeptide = ADP + phosphate + an unfolded polypeptide.. In terms of biological role, together with its co-chaperonin GroES, plays an essential role in assisting protein folding. The GroEL-GroES system forms a nano-cage that allows encapsulation of the non-native substrate proteins and provides a physical environment optimized to promote and accelerate protein folding. The chain is Chaperonin GroEL from Shewanella sp. (strain W3-18-1).